Reading from the N-terminus, the 268-residue chain is Mitochondrial distribution and morphology protein 12 (268 aa).

The SMP-LTD domain maps to 1-266; it reads MSIDLEWCKL…FPNFHTIVMA (266 aa). The segment at 66 to 136 is disordered; it reads EDDEEGSDRG…PPPAENPHPN (71 aa). The segment covering 102–111 has biased composition (polar residues); it reads PATNVTSSLD. The span at 112–121 shows a compositional bias: basic and acidic residues; it reads TRSDQPDDQK.

The protein belongs to the MDM12 family. Component of the ER-mitochondria encounter structure (ERMES) or MDM complex, composed of MMM1, MDM10, MDM12 and MDM34. An MMM1 homodimer associates with one molecule of MDM12 on each side in a pairwise head-to-tail manner, and the SMP-LTD domains of MMM1 and MDM12 generate a continuous hydrophobic tunnel for phospholipid trafficking.

It localises to the mitochondrion outer membrane. Its subcellular location is the endoplasmic reticulum membrane. Functionally, component of the ERMES/MDM complex, which serves as a molecular tether to connect the endoplasmic reticulum (ER) and mitochondria. Components of this complex are involved in the control of mitochondrial shape and protein biogenesis, and function in nonvesicular lipid trafficking between the ER and mitochondria. MDM12 is required for the interaction of the ER-resident membrane protein MMM1 and the outer mitochondrial membrane-resident beta-barrel protein MDM10. The MDM12-MMM1 subcomplex functions in the major beta-barrel assembly pathway that is responsible for biogenesis of all mitochondrial outer membrane beta-barrel proteins, and acts in a late step after the SAM complex. The MDM10-MDM12-MMM1 subcomplex further acts in the TOM40-specific pathway after the action of the MDM12-MMM1 complex. Essential for establishing and maintaining the structure of mitochondria and maintenance of mtDNA nucleoids. The polypeptide is Mitochondrial distribution and morphology protein 12 (Laccaria bicolor (strain S238N-H82 / ATCC MYA-4686) (Bicoloured deceiver)).